The chain runs to 109 residues: Thiosulfate sulfurtransferase GlpE (109 aa).

One can recognise a Rhodanese domain in the interval 16–104 (RAEGAVVVDI…WRSTYPGETA (89 aa)). Cysteine 64 (cysteine persulfide intermediate) is an active-site residue.

The protein belongs to the GlpE family.

The protein resides in the cytoplasm. The catalysed reaction is thiosulfate + hydrogen cyanide = thiocyanate + sulfite + 2 H(+). It carries out the reaction thiosulfate + [thioredoxin]-dithiol = [thioredoxin]-disulfide + hydrogen sulfide + sulfite + 2 H(+). Transferase that catalyzes the transfer of sulfur from thiosulfate to thiophilic acceptors such as cyanide or dithiols. May function in a CysM-independent thiosulfate assimilation pathway by catalyzing the conversion of thiosulfate to sulfite, which can then be used for L-cysteine biosynthesis. The chain is Thiosulfate sulfurtransferase GlpE from Pseudomonas entomophila (strain L48).